Consider the following 847-residue polypeptide: DNA mismatch repair protein MutS (847 aa).

Position 603-610 (603-610 (GPNMSGKS)) interacts with ATP.

This sequence belongs to the DNA mismatch repair MutS family.

In terms of biological role, this protein is involved in the repair of mismatches in DNA. It is possible that it carries out the mismatch recognition step. This protein has a weak ATPase activity. This Streptococcus suis (strain 98HAH33) protein is DNA mismatch repair protein MutS.